A 597-amino-acid chain; its full sequence is Chaperonin 60 subunit beta 3, chloroplastic (597 aa).

Residues 1-20 (MASTFSATSSMGSSLAPPSN) are disordered. A chloroplast-targeting transit peptide spans 1 to 29 (MASTFSATSSMGSSLAPPSNRLSSFVSIS). A phosphoserine mark is found at S97 and S474. Residues 387–489 (STEEVVKKRV…KETLANDEEK (103 aa)) adopt a coiled-coil conformation.

It belongs to the chaperonin (HSP60) family. In terms of assembly, part of the Cpn60 complex composed of 7 alpha and 7 beta subunits. Can also form a complex composed of 14 beta subunits only. Both complexes show ATPase activity. The Cpn60 complex interacts with the Cpn10 complex.

The protein resides in the plastid. It localises to the chloroplast. Functionally, involved in protein assisted folding. The sequence is that of Chaperonin 60 subunit beta 3, chloroplastic (CPN60B3) from Arabidopsis thaliana (Mouse-ear cress).